The sequence spans 741 residues: Zinc finger and BTB domain-containing protein 20 (741 aa).

The span at 1–17 shows a compositional bias: basic and acidic residues; the sequence is MLERKKPKTAENQKASE. The tract at residues 1–28 is disordered; it reads MLERKKPKTAENQKASEENEITQPGGSS. Residues 104-167 enclose the BTB domain; sequence CDVTVRIHGS…MYSGVLRVSQ (64 aa). A disordered region spans residues 203-235; the sequence is GIQDSGQDTPRGTPESGTSGQSSDTESGYLQSH. Residues 206–235 are compositionally biased toward polar residues; it reads DSGQDTPRGTPESGTSGQSSDTESGYLQSH. Threonine 211 carries the phosphothreonine modification. Lysine 330 is covalently cross-linked (Glycyl lysine isopeptide (Lys-Gly) (interchain with G-Cter in SUMO1); alternate). Residue lysine 330 forms a Glycyl lysine isopeptide (Lys-Gly) (interchain with G-Cter in SUMO2); alternate linkage. A disordered region spans residues 350–440; that stretch reads RNESEECTED…SSPERSNESE (91 aa). Phosphoserine is present on serine 353. Acidic residues predominate over residues 354–367; it reads EECTEDTDQAEGTE. Threonine 357 carries the post-translational modification Phosphothreonine. Lysine 371 participates in a covalent cross-link: Glycyl lysine isopeptide (Lys-Gly) (interchain with G-Cter in SUMO2). The segment covering 404–423 has biased composition (low complexity); sequence AEPAQPEQAAEAPAESSAQP. 4 C2H2-type zinc fingers span residues 578–600, 606–628, 634–656, and 662–684; these read YECTLCNKTFTAKQNYVKHMFVH, HQCSICWRSFSLKDYLIKHMVTH, YQCSICNKRFTQKSSLNVHMRLH, and YECYICKKKFSHKTLLERHVALH. Threonine 690 and threonine 695 each carry phosphothreonine. The segment at 715–737 adopts a C2H2-type 5 zinc-finger fold; it reads YVCSVCPAKFDQIEQFNDHMRMH. Residue lysine 723 forms a Glycyl lysine isopeptide (Lys-Gly) (interchain with G-Cter in SUMO2) linkage.

As to quaternary structure, can homodimerize. Binds to DNA. Sumoylated with SUMO1. In terms of tissue distribution, specifically expressed in early hippocampal neurons, cerebellar granule cells and gliogenic progenitors as well as in differentiated glia. Expressed in adult and aged myogenic satellite cells.

It is found in the nucleus. Its function is as follows. May be a transcription factor that may be involved in hematopoiesis, oncogenesis, and immune responses. Plays a role in postnatal myogenesis, may be involved in the regulation of satellite cells self-renewal. The sequence is that of Zinc finger and BTB domain-containing protein 20 (Zbtb20) from Mus musculus (Mouse).